A 65-amino-acid chain; its full sequence is Large ribosomal subunit protein bL35 (65 aa).

This sequence belongs to the bacterial ribosomal protein bL35 family.

This Thermotoga petrophila (strain ATCC BAA-488 / DSM 13995 / JCM 10881 / RKU-1) protein is Large ribosomal subunit protein bL35.